Reading from the N-terminus, the 673-residue chain is UvrABC system protein B (673 aa).

The Helicase ATP-binding domain maps to 26–414; sequence EGLEDGLAHQ…GDEVVDQVVR (389 aa). 39–46 provides a ligand contact to ATP; the sequence is GVTGSGKT. Positions 92 to 115 match the Beta-hairpin motif; it reads YYDYYQPEAYVPSSDTFIEKDASV. The region spanning 431 to 597 is the Helicase C-terminal domain; sequence QVDDLLSEIR…GLNKKVVDIL (167 aa). Residues 633-668 enclose the UVR domain; it reads QQKIHELEEQMMQHAQNLEFEEAAQIRDQLHQLREL.

It belongs to the UvrB family. Forms a heterotetramer with UvrA during the search for lesions. Interacts with UvrC in an incision complex.

The protein localises to the cytoplasm. In terms of biological role, the UvrABC repair system catalyzes the recognition and processing of DNA lesions. A damage recognition complex composed of 2 UvrA and 2 UvrB subunits scans DNA for abnormalities. Upon binding of the UvrA(2)B(2) complex to a putative damaged site, the DNA wraps around one UvrB monomer. DNA wrap is dependent on ATP binding by UvrB and probably causes local melting of the DNA helix, facilitating insertion of UvrB beta-hairpin between the DNA strands. Then UvrB probes one DNA strand for the presence of a lesion. If a lesion is found the UvrA subunits dissociate and the UvrB-DNA preincision complex is formed. This complex is subsequently bound by UvrC and the second UvrB is released. If no lesion is found, the DNA wraps around the other UvrB subunit that will check the other stand for damage. This chain is UvrABC system protein B, found in Salmonella typhi.